Reading from the N-terminus, the 707-residue chain is Trans-feruloyl-CoA synthase FCS1 (707 aa).

Residues His267 and Ala524–Ala535 each bind ATP. The ATP-grasp domain maps to Lys498–Val549.

The protein in the N-terminal section; belongs to the acetate CoA ligase alpha subunit family. In the C-terminal section; belongs to the acetate CoA ligase beta subunit family. In terms of assembly, homodimer.

The catalysed reaction is (E)-ferulate + ATP + CoA = (E)-feruloyl-CoA + ADP + phosphate. Functionally, catalyzes the formation of feruloyl-CoA, ADP and phosphate from ferulate, CoA and ATP. The polypeptide is Trans-feruloyl-CoA synthase FCS1 (Unknown prokaryotic organism).